The sequence spans 254 residues: Undecaprenyl-diphosphatase (254 aa).

8 consecutive transmembrane segments (helical) span residues 1–21 (MDII…FLPI), 41–61 (LTKA…MLIY), 70–90 (IDLW…GFIF), 97–117 (LFNV…FLIV), 134–154 (VSWT…IPGT), 175–195 (AEFS…YDLL), 209–229 (FLIG…LFLV), and 234–254 (FTFV…LMIL).

This sequence belongs to the UppP family.

The protein localises to the cell inner membrane. It catalyses the reaction di-trans,octa-cis-undecaprenyl diphosphate + H2O = di-trans,octa-cis-undecaprenyl phosphate + phosphate + H(+). Functionally, catalyzes the dephosphorylation of undecaprenyl diphosphate (UPP). Confers resistance to bacitracin. This Sulfurovum sp. (strain NBC37-1) protein is Undecaprenyl-diphosphatase.